A 601-amino-acid chain; its full sequence is Aspartate--tRNA ligase (601 aa).

Glu183 is a binding site for L-aspartate. Residues 207–210 (QIFK) are aspartate. Arg229 contacts L-aspartate. Residues 229–231 (RDE) and Gln238 each bind ATP. His457 contributes to the L-aspartate binding site. ATP is bound at residue Glu497. An L-aspartate-binding site is contributed by Arg504. Position 549–552 (549–552 (GIDR)) interacts with ATP.

Belongs to the class-II aminoacyl-tRNA synthetase family. Type 1 subfamily. In terms of assembly, homodimer.

It localises to the cytoplasm. It carries out the reaction tRNA(Asp) + L-aspartate + ATP = L-aspartyl-tRNA(Asp) + AMP + diphosphate. In terms of biological role, catalyzes the attachment of L-aspartate to tRNA(Asp) in a two-step reaction: L-aspartate is first activated by ATP to form Asp-AMP and then transferred to the acceptor end of tRNA(Asp). The polypeptide is Aspartate--tRNA ligase (Leptospira interrogans serogroup Icterohaemorrhagiae serovar Lai (strain 56601)).